The sequence spans 185 residues: ATP synthase subunit delta (185 aa).

This sequence belongs to the ATPase delta chain family. F-type ATPases have 2 components, F(1) - the catalytic core - and F(0) - the membrane proton channel. F(1) has five subunits: alpha(3), beta(3), gamma(1), delta(1), epsilon(1). CF(0) has four main subunits: a(1), b(2) and c(10-14). The alpha and beta chains form an alternating ring which encloses part of the gamma chain. F(1) is attached to F(0) by a central stalk formed by the gamma and epsilon chains, while a peripheral stalk is formed by the delta and b chains.

Its subcellular location is the cell membrane. In terms of biological role, f(1)F(0) ATP synthase produces ATP from ADP in the presence of a proton or sodium gradient. F-type ATPases consist of two structural domains, F(1) containing the extramembraneous catalytic core and F(0) containing the membrane proton channel, linked together by a central stalk and a peripheral stalk. During catalysis, ATP synthesis in the catalytic domain of F(1) is coupled via a rotary mechanism of the central stalk subunits to proton translocation. This protein is part of the stalk that links CF(0) to CF(1). It either transmits conformational changes from CF(0) to CF(1) or is implicated in proton conduction. The protein is ATP synthase subunit delta of Heliobacterium modesticaldum (strain ATCC 51547 / Ice1).